The primary structure comprises 134 residues: MSFIREFKEFVMRGNVIDLAVAVVIGAAFGKIVTALVDKIISPLIGVMVGGIDFSKLSLTLKAATVDTAGKEVPAVVIGYGDFINTILQFIIIAFAIFIIVKMINKVINKQPLPPETPSEDVLLLREIRDSLKK.

The next 2 membrane-spanning stretches (helical) occupy residues 16-36 (VIDL…VTAL) and 81-101 (GDFI…FIIV).

This sequence belongs to the MscL family. Homopentamer.

The protein resides in the cell inner membrane. In terms of biological role, channel that opens in response to stretch forces in the membrane lipid bilayer. May participate in the regulation of osmotic pressure changes within the cell. The polypeptide is Large-conductance mechanosensitive channel (Xylella fastidiosa (strain Temecula1 / ATCC 700964)).